The primary structure comprises 282 residues: Parvulin-like PPIase (282 aa).

Residues 1–20 (MKKLSVIFLSVSMLSSIAFG) form the signal peptide. Residues 138–231 (KEQIKVAHIL…FGWHIIKVLE (94 aa)) form the PpiC domain.

This sequence belongs to the PpiC/parvulin rotamase family.

The protein resides in the cell outer membrane. It carries out the reaction [protein]-peptidylproline (omega=180) = [protein]-peptidylproline (omega=0). In Rickettsia prowazekii (strain Madrid E), this protein is Parvulin-like PPIase (plp).